The chain runs to 155 residues: Small ribosomal subunit protein uS7 (155 aa).

This sequence belongs to the universal ribosomal protein uS7 family. As to quaternary structure, part of the 30S ribosomal subunit. Contacts proteins S9 and S11.

Its function is as follows. One of the primary rRNA binding proteins, it binds directly to 16S rRNA where it nucleates assembly of the head domain of the 30S subunit. Is located at the subunit interface close to the decoding center, probably blocks exit of the E-site tRNA. This chain is Small ribosomal subunit protein uS7, found in Chlorobium phaeobacteroides (strain DSM 266 / SMG 266 / 2430).